Reading from the N-terminus, the 197-residue chain is Probable deoxycytidylate deaminase (197 aa).

Residues 49–183 (KKHQRFLRIA…KMLDHARLPY (135 aa)) form the CMP/dCMP-type deaminase domain. Position 117 (histidine 117) interacts with Zn(2+). Catalysis depends on glutamate 119, which acts as the Proton donor. 2 residues coordinate Zn(2+): cysteine 143 and cysteine 146.

Belongs to the cytidine and deoxycytidylate deaminase family. Zn(2+) serves as cofactor.

The catalysed reaction is dCMP + H2O + H(+) = dUMP + NH4(+). In terms of biological role, supplies the nucleotide substrate for thymidylate synthetase. The chain is Probable deoxycytidylate deaminase from Caenorhabditis elegans.